The following is a 222-amino-acid chain: Endonuclease V (222 aa).

The Mg(2+) site is built by Asp-34 and Asp-102.

Belongs to the endonuclease V family. It depends on Mg(2+) as a cofactor.

It localises to the cytoplasm. It carries out the reaction Endonucleolytic cleavage at apurinic or apyrimidinic sites to products with a 5'-phosphate.. In terms of biological role, DNA repair enzyme involved in the repair of deaminated bases. Selectively cleaves double-stranded DNA at the second phosphodiester bond 3' to a deoxyinosine leaving behind the intact lesion on the nicked DNA. The protein is Endonuclease V of Proteus mirabilis (strain HI4320).